A 350-amino-acid polypeptide reads, in one-letter code: MEVRHDWTVAEVQALFEKPFMDLVFEAQQVHRQYHEPNKVQVSTLLSIKTGACPEDCKYCPQSAHYRTDVERERLLEVEKVLDAAQKAKVSGATRFCMGAAWKNPKERDMPYLMDMIRGVKDIGLETCMTLGMITGGQADELAGAGLDYYNHNLDTSPEYYGQVITTRTYQDRLDTLSHVRDAGMKICSGGIIGMGESSRDRAGLLVELATLPTHPESVPINMLVKVKGTPMEDVEDVDPFDFIRIIAVARIIMPMSSVRLSAGREDMNEQMQTLCFMAGANSVFYGCKLLTTPNPGEDKDMQLFAKLGINSQEQAAKPDEVQEHELLGQVAQRVAARPGKDDLFYDATV.

Residues 38–257 enclose the Radical SAM core domain; it reads NKVQVSTLLS…AVARIIMPMS (220 aa). Residues C53, C57, and C60 each contribute to the [4Fe-4S] cluster site. Positions 97, 128, 188, and 260 each coordinate [2Fe-2S] cluster.

The protein belongs to the radical SAM superfamily. Biotin synthase family. As to quaternary structure, homodimer. [4Fe-4S] cluster is required as a cofactor. It depends on [2Fe-2S] cluster as a cofactor.

It carries out the reaction (4R,5S)-dethiobiotin + (sulfur carrier)-SH + 2 reduced [2Fe-2S]-[ferredoxin] + 2 S-adenosyl-L-methionine = (sulfur carrier)-H + biotin + 2 5'-deoxyadenosine + 2 L-methionine + 2 oxidized [2Fe-2S]-[ferredoxin]. It functions in the pathway cofactor biosynthesis; biotin biosynthesis; biotin from 7,8-diaminononanoate: step 2/2. Its function is as follows. Catalyzes the conversion of dethiobiotin (DTB) to biotin by the insertion of a sulfur atom into dethiobiotin via a radical-based mechanism. The protein is Biotin synthase of Photobacterium profundum (strain SS9).